Here is a 181-residue protein sequence, read N- to C-terminus: Adenylyl-sulfate kinase (181 aa).

12–19 (GLSGAGKS) contributes to the ATP binding site. The active-site Phosphoserine intermediate is the Ser86.

The protein belongs to the APS kinase family.

It carries out the reaction adenosine 5'-phosphosulfate + ATP = 3'-phosphoadenylyl sulfate + ADP + H(+). It functions in the pathway sulfur metabolism; hydrogen sulfide biosynthesis; sulfite from sulfate: step 2/3. Functionally, catalyzes the synthesis of activated sulfate. This is Adenylyl-sulfate kinase from Microcystis aeruginosa (strain NIES-843 / IAM M-2473).